A 567-amino-acid chain; its full sequence is Dihydroxy-acid dehydratase (567 aa).

Residue Cys-57 coordinates [2Fe-2S] cluster. Residue Asp-89 participates in Mg(2+) binding. Cys-130 contributes to the [2Fe-2S] cluster binding site. Asp-131 and Lys-132 together coordinate Mg(2+). Residue Lys-132 is modified to N6-carboxylysine. Cys-202 is a binding site for [2Fe-2S] cluster. Residue Glu-453 coordinates Mg(2+). Catalysis depends on Ser-479, which acts as the Proton acceptor.

It belongs to the IlvD/Edd family. In terms of assembly, homodimer. It depends on [2Fe-2S] cluster as a cofactor. Mg(2+) serves as cofactor.

The enzyme catalyses (2R)-2,3-dihydroxy-3-methylbutanoate = 3-methyl-2-oxobutanoate + H2O. It catalyses the reaction (2R,3R)-2,3-dihydroxy-3-methylpentanoate = (S)-3-methyl-2-oxopentanoate + H2O. It functions in the pathway amino-acid biosynthesis; L-isoleucine biosynthesis; L-isoleucine from 2-oxobutanoate: step 3/4. Its pathway is amino-acid biosynthesis; L-valine biosynthesis; L-valine from pyruvate: step 3/4. Functionally, functions in the biosynthesis of branched-chain amino acids. Catalyzes the dehydration of (2R,3R)-2,3-dihydroxy-3-methylpentanoate (2,3-dihydroxy-3-methylvalerate) into 2-oxo-3-methylpentanoate (2-oxo-3-methylvalerate) and of (2R)-2,3-dihydroxy-3-methylbutanoate (2,3-dihydroxyisovalerate) into 2-oxo-3-methylbutanoate (2-oxoisovalerate), the penultimate precursor to L-isoleucine and L-valine, respectively. This chain is Dihydroxy-acid dehydratase, found in Nocardioides sp. (strain ATCC BAA-499 / JS614).